The following is a 458-amino-acid chain: tRNA modification GTPase MnmE (458 aa).

The (6S)-5-formyl-5,6,7,8-tetrahydrofolate site is built by R26, E88, and R127. The TrmE-type G domain occupies 224-378 (GLSTAIIGRP…IEDRINQLFF (155 aa)). A K(+)-binding site is contributed by N234. Residues 234 to 239 (NVGKSS), 253 to 259 (TDIAGTT), and 278 to 281 (DTAG) each bind GTP. S238 contributes to the Mg(2+) binding site. K(+) is bound by residues T253, I255, and T258. Mg(2+) is bound at residue T259. K458 is a binding site for (6S)-5-formyl-5,6,7,8-tetrahydrofolate.

The protein belongs to the TRAFAC class TrmE-Era-EngA-EngB-Septin-like GTPase superfamily. TrmE GTPase family. Homodimer. Heterotetramer of two MnmE and two MnmG subunits. Requires K(+) as cofactor.

It is found in the cytoplasm. Its function is as follows. Exhibits a very high intrinsic GTPase hydrolysis rate. Involved in the addition of a carboxymethylaminomethyl (cmnm) group at the wobble position (U34) of certain tRNAs, forming tRNA-cmnm(5)s(2)U34. The chain is tRNA modification GTPase MnmE from Streptococcus pyogenes serotype M18 (strain MGAS8232).